The primary structure comprises 359 residues: Phosphoserine aminotransferase (359 aa).

Arg-42 provides a ligand contact to L-glutamate. Residues 76-77 (AS), Trp-102, Thr-152, Asp-171, and Gln-194 each bind pyridoxal 5'-phosphate. Residue Lys-195 is modified to N6-(pyridoxal phosphate)lysine. Position 236 to 237 (236 to 237 (NT)) interacts with pyridoxal 5'-phosphate.

Belongs to the class-V pyridoxal-phosphate-dependent aminotransferase family. SerC subfamily. Homodimer. Requires pyridoxal 5'-phosphate as cofactor.

The protein localises to the cytoplasm. It carries out the reaction O-phospho-L-serine + 2-oxoglutarate = 3-phosphooxypyruvate + L-glutamate. The enzyme catalyses 4-(phosphooxy)-L-threonine + 2-oxoglutarate = (R)-3-hydroxy-2-oxo-4-phosphooxybutanoate + L-glutamate. The protein operates within amino-acid biosynthesis; L-serine biosynthesis; L-serine from 3-phospho-D-glycerate: step 2/3. Its pathway is cofactor biosynthesis; pyridoxine 5'-phosphate biosynthesis; pyridoxine 5'-phosphate from D-erythrose 4-phosphate: step 3/5. Functionally, catalyzes the reversible conversion of 3-phosphohydroxypyruvate to phosphoserine and of 3-hydroxy-2-oxo-4-phosphonooxybutanoate to phosphohydroxythreonine. This chain is Phosphoserine aminotransferase, found in Vesicomyosocius okutanii subsp. Calyptogena okutanii (strain HA).